Here is a 176-residue protein sequence, read N- to C-terminus: NAD(P)H-quinone oxidoreductase subunit 6, chloroplastic (176 aa).

5 consecutive transmembrane segments (helical) span residues 10–30 (FLLV…VLFT), 33–53 (IFSA…YILA), 63–83 (LLIY…FMSG), 105–125 (ISLF…GIIW), and 152–172 (FFLP…GAIA).

Belongs to the complex I subunit 6 family. In terms of assembly, NDH is composed of at least 16 different subunits, 5 of which are encoded in the nucleus.

Its subcellular location is the plastid. It is found in the chloroplast thylakoid membrane. The catalysed reaction is a plastoquinone + NADH + (n+1) H(+)(in) = a plastoquinol + NAD(+) + n H(+)(out). The enzyme catalyses a plastoquinone + NADPH + (n+1) H(+)(in) = a plastoquinol + NADP(+) + n H(+)(out). Its function is as follows. NDH shuttles electrons from NAD(P)H:plastoquinone, via FMN and iron-sulfur (Fe-S) centers, to quinones in the photosynthetic chain and possibly in a chloroplast respiratory chain. The immediate electron acceptor for the enzyme in this species is believed to be plastoquinone. Couples the redox reaction to proton translocation, and thus conserves the redox energy in a proton gradient. In Spinacia oleracea (Spinach), this protein is NAD(P)H-quinone oxidoreductase subunit 6, chloroplastic (ndhG).